The primary structure comprises 619 residues: Cationic amino acid transporter 3 (619 aa).

Residues 1-36 (MPWQAFRRFGQKLVRRRTLESGMAETRLARCLSTLD) lie on the Cytoplasmic side of the membrane. A helical membrane pass occupies residues 37–57 (LVALGVGSTLGAGVYVLAGEV). The Extracellular segment spans residues 58-61 (AKDK). A helical transmembrane segment spans residues 62–82 (AGPSIVICFLVAALSSVLAGL). Residues 83-107 (CYAEFGARVPRSGSAYLYSYVTVGE) are Cytoplasmic-facing. A helical membrane pass occupies residues 108 to 128 (LWAFTTGWNLILSYVIGTASV). Residues 129–162 (ARAWSSAFDNLIGNHISKTLQGSIALHVPHVLAE) lie on the Extracellular side of the membrane. The helical transmembrane segment at 163–183 (YPDFFALGLVLLLTGLLALGA) threads the bilayer. The Cytoplasmic portion of the chain corresponds to 184 to 191 (SESALVTK). The chain crosses the membrane as a helical span at residues 192–212 (VFTGVNLLVLGFVMISGFVKG). Topologically, residues 213–233 (DVHNWKLTEEDYELAMAELND) are extracellular. N-linked (GlcNAc...) asparagine glycosylation is present at Asn232. A helical membrane pass occupies residues 234 to 254 (TYSLGPLGSGGFVPFGFEGIL). The Cytoplasmic portion of the chain corresponds to 255–285 (RGAATCFYAFVGFDCIATTGEEAQNPQRSIP). A helical transmembrane segment spans residues 286–306 (MGIVISLSVCFLAYFAVSSAL). At 307-335 (TLMMPYYQLQPESPLPEAFLYIGWAPARY) the chain is on the extracellular side. Residues 336-356 (VVAVGSLCALSTSLLGSMFPM) form a helical membrane-spanning segment. Over 357–382 (PRVIYAMAEDGLLFRVLARIHTGTRT) the chain is Cytoplasmic. The helical transmembrane segment at 383-403 (PIIATVVSGIIAAFMAFLFKL) threads the bilayer. The Extracellular segment spans residues 404-406 (TDL). The helical transmembrane segment at 407–427 (VDLMSIGTLLAYSLVSICVLI) threads the bilayer. The Cytoplasmic segment spans residues 428 to 475 (LRYQPDQETKTGEEVELQEEAITTESEKLTLWGLFFPLNSIPTPLSGQ). The chain crosses the membrane as a helical span at residues 476–496 (IVYVCSSLLAVLLTALCLVLA). Topologically, residues 497 to 506 (QWSVPLLSGD) are extracellular. A helical membrane pass occupies residues 507–527 (LLWTAVVVLLLLLIIGIIVVI). Over 528 to 540 (WRQPQSSTPLHFK) the chain is Cytoplasmic. The chain crosses the membrane as a helical span at residues 541–561 (VPALPLLPLMSIFVNIYLMMQ). The Extracellular portion of the chain corresponds to 562–569 (MTAGTWAR). The chain crosses the membrane as a helical span at residues 570–590 (FGVWMLIGFAIYFGYGIQHSL). Over 591–619 (EEIKSNQPSRKSRAKTVDLDPGTLYVHSV) the chain is Cytoplasmic. The residue at position 606 (Thr606) is a Phosphothreonine. Phosphoserine is present on Ser618.

This sequence belongs to the amino acid-polyamine-organocation (APC) superfamily. Cationic amino acid transporter (CAT) (TC 2.A.3.3) family. In terms of processing, N-glycosylated. Highly expressed in thymus, uterus and testis. Detected at lower levels in brain, mammary gland, prostate, salivary gland and fetal spleen. In brain, highest expression in thalamus, hippocampus and amygdala.

The protein resides in the cell membrane. The catalysed reaction is L-arginine(in) = L-arginine(out). It carries out the reaction L-lysine(in) = L-lysine(out). It catalyses the reaction L-ornithine(in) = L-ornithine(out). In terms of biological role, uniporter that mediates the uptake of cationic L-amino acids such as L-arginine, L-lysine and L-ornithine. The transport is sodium ions- and pH-independent, moderately trans-stimulated and is mediated by passive diffusion. In Homo sapiens (Human), this protein is Cationic amino acid transporter 3.